The sequence spans 542 residues: Membrane protein insertase YidC (542 aa).

The next 5 helical transmembrane spans lie at 7–27 (LLVM…QQDF), 338–358 (FALL…IIGV), 417–437 (MGGC…YWTF), 455–475 (LSAQ…MFLL), and 494–514 (FMPV…VLYW).

It belongs to the OXA1/ALB3/YidC family. Type 1 subfamily. In terms of assembly, interacts with the Sec translocase complex via SecD. Specifically interacts with transmembrane segments of nascent integral membrane proteins during membrane integration.

It is found in the cell inner membrane. In terms of biological role, required for the insertion and/or proper folding and/or complex formation of integral membrane proteins into the membrane. Involved in integration of membrane proteins that insert both dependently and independently of the Sec translocase complex, as well as at least some lipoproteins. Aids folding of multispanning membrane proteins. The polypeptide is Membrane protein insertase YidC (Actinobacillus pleuropneumoniae serotype 7 (strain AP76)).